Reading from the N-terminus, the 301-residue chain is Troponin T, cardiac muscle (301 aa).

Over residues 1-72 (MSDAEEVVEE…EAKDAEEGPV (72 aa)) the composition is skewed to acidic residues. 2 disordered regions span residues 1–97 (MSDA…DGER) and 125–224 (NRKK…KKKI). Ser2 is modified (N-acetylserine). The residue at position 2 (Ser2) is a Phosphoserine; by CK2. Composition is skewed to basic and acidic residues over residues 125–186 (NRKK…DEAR) and 206–224 (QTER…KKKI). Thr207 is subject to Phosphothreonine; by PKC/PRKCA. Phosphoserine; by PKC/PRKCA is present on Ser211. Phosphothreonine; by PKC/PRKCA and RAF1 is present on Thr216. The residue at position 297 (Thr297) is a Phosphothreonine; by PKC/PRKCA.

The protein belongs to the troponin T family. In terms of processing, phosphorylation at Thr-216 by PRKCA induces significant reduction in myofilament calcium sensitivity and actomyosin ATPase activity.

In terms of biological role, troponin T is the tropomyosin-binding subunit of troponin, the thin filament regulatory complex which confers calcium-sensitivity to striated muscle actomyosin ATPase activity. The chain is Troponin T, cardiac muscle (Tnnt2) from Mus musculus (Mouse).